Consider the following 156-residue polypeptide: ATP synthase subunit b (156 aa).

The helical transmembrane segment at 7 to 27 threads the bilayer; sequence LFAQIIVFFGLVWFTMKFVWP.

It belongs to the ATPase B chain family. In terms of assembly, F-type ATPases have 2 components, F(1) - the catalytic core - and F(0) - the membrane proton channel. F(1) has five subunits: alpha(3), beta(3), gamma(1), delta(1), epsilon(1). F(0) has three main subunits: a(1), b(2) and c(10-14). The alpha and beta chains form an alternating ring which encloses part of the gamma chain. F(1) is attached to F(0) by a central stalk formed by the gamma and epsilon chains, while a peripheral stalk is formed by the delta and b chains.

Its subcellular location is the cell inner membrane. Its function is as follows. F(1)F(0) ATP synthase produces ATP from ADP in the presence of a proton or sodium gradient. F-type ATPases consist of two structural domains, F(1) containing the extramembraneous catalytic core and F(0) containing the membrane proton channel, linked together by a central stalk and a peripheral stalk. During catalysis, ATP synthesis in the catalytic domain of F(1) is coupled via a rotary mechanism of the central stalk subunits to proton translocation. In terms of biological role, component of the F(0) channel, it forms part of the peripheral stalk, linking F(1) to F(0). In Neisseria meningitidis serogroup C (strain 053442), this protein is ATP synthase subunit b.